The chain runs to 862 residues: Switch 2 (862 aa).

2 disordered regions span residues 13–43 (PCGS…SSLS) and 58–95 (KHES…DDER). Positions 16 to 27 (SFPSSSSLRVSS) are enriched in low complexity. The span at 58–84 (KHESKISKTQVEDFDHNEDDHKRNIKF) shows a compositional bias: basic and acidic residues. Acidic residues predominate over residues 85 to 95 (DEEEVDEDDER). The Helicase ATP-binding domain occupies 151 to 323 (YNLYKNNHGG…FNLFEWVAPG (173 aa)). 164–171 (DDMGLGKT) contacts ATP. Positions 274 to 277 (DEAH) match the DEAH box motif. Residues 274–294 (DEAHRLKNEKSKLYEACLEIK) are a coiled coil. A Helicase C-terminal domain is found at 532–685 (ALEKLMASWI…VAGKMETRYF (154 aa)). A compositionally biased stretch (polar residues) spans 782–793 (TTSTSQRLNGDG). The interval 782–821 (TTSTSQRLNGDGNSADRKKKKRKGCSEEEDMSSSNREQKR) is disordered.

This sequence belongs to the SNF2/RAD54 helicase family.

In terms of biological role, may be involved in early DNA damage response. Probable chromatin remodeling factor. This chain is Switch 2, found in Arabidopsis thaliana (Mouse-ear cress).